The chain runs to 348 residues: tRNA N6-adenosine threonylcarbamoyltransferase (348 aa).

Positions 116 and 120 each coordinate Fe cation. Residues 138-142, D171, G184, and N282 contribute to the substrate site; that span reads IISGG. Fe cation is bound at residue D310.

This sequence belongs to the KAE1 / TsaD family. Requires Fe(2+) as cofactor.

The protein localises to the cytoplasm. The enzyme catalyses L-threonylcarbamoyladenylate + adenosine(37) in tRNA = N(6)-L-threonylcarbamoyladenosine(37) in tRNA + AMP + H(+). Functionally, required for the formation of a threonylcarbamoyl group on adenosine at position 37 (t(6)A37) in tRNAs that read codons beginning with adenine. Is involved in the transfer of the threonylcarbamoyl moiety of threonylcarbamoyl-AMP (TC-AMP) to the N6 group of A37, together with TsaE and TsaB. TsaD likely plays a direct catalytic role in this reaction. The chain is tRNA N6-adenosine threonylcarbamoyltransferase from Ehrlichia ruminantium (strain Welgevonden).